Reading from the N-terminus, the 123-residue chain is Large ribosomal subunit protein bL12 (123 aa).

This sequence belongs to the bacterial ribosomal protein bL12 family. Homodimer. Part of the ribosomal stalk of the 50S ribosomal subunit. Forms a multimeric L10(L12)X complex, where L10 forms an elongated spine to which 2 to 4 L12 dimers bind in a sequential fashion. Binds GTP-bound translation factors.

Its function is as follows. Forms part of the ribosomal stalk which helps the ribosome interact with GTP-bound translation factors. Is thus essential for accurate translation. The polypeptide is Large ribosomal subunit protein bL12 (Acinetobacter baumannii (strain AB307-0294)).